The sequence spans 202 residues: Dual-action ribosomal maturation protein DarP (202 aa).

A compositionally biased stretch (low complexity) spans 1-13; that stretch reads MPPMTRNTRNNPN. The interval 1–39 is disordered; that stretch reads MPPMTRNTRNNPNGRFPGAFAPEDEDDLPKSKSQRKRDM.

The protein belongs to the DarP family.

It localises to the cytoplasm. Member of a network of 50S ribosomal subunit biogenesis factors which assembles along the 30S-50S interface, preventing incorrect 23S rRNA structures from forming. Promotes peptidyl transferase center (PTC) maturation. The sequence is that of Dual-action ribosomal maturation protein DarP from Cupriavidus metallidurans (strain ATCC 43123 / DSM 2839 / NBRC 102507 / CH34) (Ralstonia metallidurans).